A 76-amino-acid chain; its full sequence is Acyl carrier protein (76 aa).

The Carrier domain maps to 2 to 76; the sequence is SSIFDKVKAI…SAVEYIKENQ (75 aa). The residue at position 36 (S36) is an O-(pantetheine 4'-phosphoryl)serine.

This sequence belongs to the acyl carrier protein (ACP) family. In terms of processing, 4'-phosphopantetheine is transferred from CoA to a specific serine of apo-ACP by AcpS. This modification is essential for activity because fatty acids are bound in thioester linkage to the sulfhydryl of the prosthetic group.

It is found in the cytoplasm. It participates in lipid metabolism; fatty acid biosynthesis. Functionally, carrier of the growing fatty acid chain in fatty acid biosynthesis. This Heliobacterium modesticaldum (strain ATCC 51547 / Ice1) protein is Acyl carrier protein.